Reading from the N-terminus, the 184-residue chain is Cathelicidin-related peptide Pt_CRAMP2 (184 aa).

The N-terminal stretch at 1-22 (MDGFFWKTWLVVAALAIGGTSS) is a signal peptide. Residues 23-150 (LPHKPLTYEE…EDEKDQPRRV (128 aa)) constitute a propeptide that is removed on maturation. 2 disulfide bridges follow: cysteine 81–cysteine 92 and cysteine 103–cysteine 120. A compositionally biased stretch (acidic residues) spans 125–144 (EDEEQNQEEEEEEEKEEDEK). Residues 125-147 (EDEEQNQEEEEEEEKEEDEKDQP) are disordered.

Belongs to the cathelicidin family. Expressed by the venom gland.

The protein resides in the secreted. Its subcellular location is the target cell membrane. Functionally, potent antimicrobial peptide against most of Gram-negative bacteria, some Gram-positive bacteria (Bacillus) and some fungi (C.albicans, P.pastoris, A.terreus, A.nidulans, and C.globosum). Adopts an amphipathic alpha helical conformation, that may allow to partition into the target membrane. No hemolytic and cytotoxic activities have been observed on mammalian cells. In Pseudonaja textilis (Eastern brown snake), this protein is Cathelicidin-related peptide Pt_CRAMP2.